The following is a 262-amino-acid chain: uncharacterized protein (262 aa).

This is an uncharacterized protein from Bacillus subtilis (strain 168).